We begin with the raw amino-acid sequence, 181 residues long: Transcription termination/antitermination protein NusG (181 aa).

A KOW domain is found at 130-161; sequence PGELVRVSDGPFADFNGVVEEVDYEKSRLKVS.

This sequence belongs to the NusG family. As to quaternary structure, monomer. Interacts with the transcription termination factor Rho and with RNA polymerase.

In terms of biological role, participates in transcription elongation, termination and antitermination. In the absence of Rho, increases the rate of transcription elongation by the RNA polymerase (RNAP), probably by partially suppressing pausing. In the presence of Rho, modulates most Rho-dependent termination events by interacting with the RNAP to render the complex more susceptible to the termination activity of Rho. May be required to overcome a kinetic limitation of Rho to function at certain terminators. Also involved in ribosomal RNA transcriptional antitermination. The protein is Transcription termination/antitermination protein NusG of Yersinia pestis.